Here is a 169-residue protein sequence, read N- to C-terminus: Disulfide bond formation protein B (169 aa).

Topologically, residues 1 to 14 (MNNLTLSLRRERRL) are cytoplasmic. Residues 15-31 (LVLLALVCLALLAGALY) form a helical membrane-spanning segment. The Periplasmic segment spans residues 32-49 (LQYVKNEDPCPLCIIQRY). The cysteines at positions 41 and 44 are disulfide-linked. Residues 50–64 (FFVLIAVFAFIGAGM) traverse the membrane as a helical segment. Topologically, residues 65–71 (ASGAGVA) are cytoplasmic. The chain crosses the membrane as a helical span at residues 72–89 (VTEALIVLSAAAGVGTAA). The Periplasmic segment spans residues 90-144 (RHLYVQLNPGFSCGFDALQPVVDSLPPARWLPGVFKVAGLCETVYPPIFGILLPG). Residues Cys-102 and Cys-130 are joined by a disulfide bond. Residues 145–163 (WALIAFVLIAVPVAVSLLR) traverse the membrane as a helical segment. Over 164 to 169 (HRGRLR) the chain is Cytoplasmic.

Belongs to the DsbB family.

The protein resides in the cell inner membrane. Required for disulfide bond formation in some periplasmic proteins. Acts by oxidizing the DsbA protein. The protein is Disulfide bond formation protein B of Burkholderia mallei (strain ATCC 23344).